Here is a 303-residue protein sequence, read N- to C-terminus: NAD kinase (303 aa).

Catalysis depends on Asp85, which acts as the Proton acceptor. NAD(+) contacts are provided by residues 85–86 (DG), 159–160 (ND), Arg187, Asp189, 200–205 (TAYALS), Ala224, and Gln258.

This sequence belongs to the NAD kinase family. A divalent metal cation serves as cofactor.

Its subcellular location is the cytoplasm. The catalysed reaction is NAD(+) + ATP = ADP + NADP(+) + H(+). In terms of biological role, involved in the regulation of the intracellular balance of NAD and NADP, and is a key enzyme in the biosynthesis of NADP. Catalyzes specifically the phosphorylation on 2'-hydroxyl of the adenosine moiety of NAD to yield NADP. In Variovorax paradoxus (strain S110), this protein is NAD kinase.